A 162-amino-acid polypeptide reads, in one-letter code: Caveolin-2 (162 aa).

Residues 1 to 86 (MGLETEKADV…FEISKYVIYK (86 aa)) lie on the Cytoplasmic side of the membrane. Y19 carries the phosphotyrosine; by SRC modification. Residues S20 and S23 each carry the phosphoserine modification. Y27 is subject to Phosphotyrosine; by SRC. The segment at residues 87 to 107 (FLTVFLAIPLAFVAGILFATL) is an intramembrane region (helical). At 108-162 (SCLHIWIIMPFVKTCLMLLPSVQTIWKSVTDVVIAPLCTSAGRSFSSVSLQLSHD) the chain is on the cytoplasmic side.

It belongs to the caveolin family. Monomer or homodimer. Interacts with CAV1; the interaction forms a stable heterooligomeric complex that is required for targeting to lipid rafts and for caveolae formation. Tyrosine phosphorylated forms do not form heterooligomers with the Tyr-19-phosphorylated form existing as a monomer or dimer, and the Tyr-27-form as a monomer only. Interacts (tyrosine phosphorylated form) with the SH2 domain-containing proteins, RASA1, NCK1 and SRC. Interacts (tyrosine phosphorylated form) with INSR, the interaction (Tyr-27-phosphorylated form) is increased on insulin stimulation. Interacts (Tyr-19 phosphorylated form) with MAPK1 (phosphorylated form); the interaction, promoted by insulin, leads to nuclear location and MAPK1 activation. Interacts with STAT3; the interaction is increased on insulin-induced tyrosine phosphorylation leading to STAT activation. Post-translationally, phosphorylated on serine and tyrosine residues. CAV1 promotes phosphorylation on Ser-23 which then targets the complex to the plasma membrane, lipid rafts and caveolae. Phosphorylation on both Tyr-19 and Tyr-27 is required for insulin-induced 'Ser-727' phosphorylation of STAT3 and its activation. Phosphorylation on Tyr-19 is required for insulin-induced phosphorylation of MAPK1 and DNA binding of STAT3. Tyrosine phosphorylation is induced by both EGF and insulin.

It is found in the nucleus. The protein resides in the cytoplasm. The protein localises to the golgi apparatus membrane. It localises to the cell membrane. Its subcellular location is the membrane. It is found in the caveola. Its function is as follows. May act as a scaffolding protein within caveolar membranes. Interacts directly with G-protein alpha subunits and can functionally regulate their activity. Acts as an accessory protein in conjunction with CAV1 in targeting to lipid rafts and driving caveolae formation. Positive regulator of cellular mitogenesis of the MAPK signaling pathway. Required for the insulin-stimulated nuclear translocation and activation of MAPK1 and STAT3, and the subsequent regulation of cell cycle progression. This Equus caballus (Horse) protein is Caveolin-2 (CAV2).